The sequence spans 924 residues: Mediator of RNA polymerase II transcription subunit 16 (924 aa).

Belongs to the Mediator complex subunit 16 family. In terms of assembly, component of the Mediator complex.

The protein localises to the nucleus. In terms of biological role, component of the Mediator complex, a coactivator involved in the regulated transcription of nearly all RNA polymerase II-dependent genes. Mediator functions as a bridge to convey information from gene-specific regulatory proteins to the basal RNA polymerase II transcription machinery. Mediator is recruited to promoters by direct interactions with regulatory proteins and serves as a scaffold for the assembly of a functional preinitiation complex with RNA polymerase II and the general transcription factors. The sequence is that of Mediator of RNA polymerase II transcription subunit 16 (SIN4) from Yarrowia lipolytica (strain CLIB 122 / E 150) (Yeast).